Here is a 311-residue protein sequence, read N- to C-terminus: tRNA dimethylallyltransferase (311 aa).

16–23 (GPTASGKS) is an ATP binding site. A substrate-binding site is contributed by 18–23 (TASGKS). The segment at 41-44 (DSMQ) is interaction with substrate tRNA.

This sequence belongs to the IPP transferase family. Monomer. Requires Mg(2+) as cofactor.

The enzyme catalyses adenosine(37) in tRNA + dimethylallyl diphosphate = N(6)-dimethylallyladenosine(37) in tRNA + diphosphate. Functionally, catalyzes the transfer of a dimethylallyl group onto the adenine at position 37 in tRNAs that read codons beginning with uridine, leading to the formation of N6-(dimethylallyl)adenosine (i(6)A). This is tRNA dimethylallyltransferase from Geobacter sulfurreducens (strain ATCC 51573 / DSM 12127 / PCA).